A 353-amino-acid polypeptide reads, in one-letter code: Uroporphyrinogen decarboxylase (353 aa).

Substrate is bound by residues 26 to 30, aspartate 76, tyrosine 153, threonine 208, and histidine 326; that span reads RQAGR.

This sequence belongs to the uroporphyrinogen decarboxylase family. In terms of assembly, homodimer.

It localises to the cytoplasm. It carries out the reaction uroporphyrinogen III + 4 H(+) = coproporphyrinogen III + 4 CO2. It functions in the pathway porphyrin-containing compound metabolism; protoporphyrin-IX biosynthesis; coproporphyrinogen-III from 5-aminolevulinate: step 4/4. In terms of biological role, catalyzes the decarboxylation of four acetate groups of uroporphyrinogen-III to yield coproporphyrinogen-III. The sequence is that of Uroporphyrinogen decarboxylase from Chromohalobacter salexigens (strain ATCC BAA-138 / DSM 3043 / CIP 106854 / NCIMB 13768 / 1H11).